A 210-amino-acid chain; its full sequence is Ribosomal RNA small subunit methyltransferase G (210 aa).

S-adenosyl-L-methionine contacts are provided by residues Gly76, Met81, Val127–Glu128, and Arg145.

It belongs to the methyltransferase superfamily. RNA methyltransferase RsmG family.

It localises to the cytoplasm. The catalysed reaction is guanosine(527) in 16S rRNA + S-adenosyl-L-methionine = N(7)-methylguanosine(527) in 16S rRNA + S-adenosyl-L-homocysteine. Functionally, specifically methylates the N7 position of guanine in position 527 of 16S rRNA. In Acinetobacter baumannii (strain AB307-0294), this protein is Ribosomal RNA small subunit methyltransferase G.